A 183-amino-acid chain; its full sequence is Ras-related protein Rap-2a (183 aa).

10 to 17 (GSGGVGKS) is a GTP binding site. An Effector region motif is present at residues 32–40 (YDPTIEDFY). GTP is bound by residues 57-61 (DTAGT) and 116-119 (NKVD). Residues cysteine 176 and cysteine 177 are each lipidated (S-palmitoyl cysteine). At cysteine 180 the chain carries Cysteine methyl ester. The S-farnesyl cysteine moiety is linked to residue cysteine 180. Residues 181–183 (VIL) constitute a propeptide, removed in mature form.

Belongs to the small GTPase superfamily. Ras family. Interacts (GTP-bound form) with RUNDC3A. Interacts with PLCE1. Interacts with ARHGAP29, SGSM1, SGSM2 and SGSM3. Interacts (GTP-bound form preferentially) with TNIK (via the CNH domain); the interaction is direct and recruits RAP2A to the E3 ubiquitin ligase NEDD4. Interacts with MINK1. Interacts (GTP-bound form preferentially) with MAP4K4. Interacts with cytoskeletal actin. Interacts with RGS14; the interaction is GTP-dependent. Ubiquitinated; undergoes 'Lys-63' monoubiquitination and diubiquitination by NEDD4. Multiple lysine residues are probably modified. Ubiquitination requires TNIK, prevents interaction with effectors and inactivates RAP2A. Ubiquitination by the ECS(RAB40B) complex leads to RAP2A localization to lamellipodia plasma membrane, activation, and regulation of sorting at early endosomes for recycling to the lamellipodia plasma membrane. In terms of processing, palmitoylated. Palmitoylation is required for association with recycling endosome membranes and activation of TNIK.

The protein resides in the midbody. Its subcellular location is the cell projection. It is found in the lamellipodium membrane. It localises to the golgi apparatus. The protein localises to the recycling endosome membrane. The protein resides in the lysosome. It catalyses the reaction GTP + H2O = GDP + phosphate + H(+). Activated by the guanine nucleotide-exchange factors RAPGEF3 and RAPGEF4 in a cAMP-dependent manner. Nucleotide exchange is also specifically stimulated by RAPGEF5, RASGEF1A and RASGEF1B. In terms of biological role, small GTP-binding protein which cycles between a GDP-bound inactive and a GTP-bound active form. In its active form interacts with and regulates several effectors including MAP4K4, MINK1 and TNIK. Part of a signaling complex composed of NEDD4, RAP2A and TNIK which regulates neuronal dendrite extension and arborization during development. More generally, it is part of several signaling cascades and may regulate cytoskeletal rearrangements, cell migration, cell adhesion and cell spreading. This is Ras-related protein Rap-2a (RAP2A) from Sus scrofa (Pig).